Consider the following 1875-residue polypeptide: Neuron navigator 1 (1875 aa).

Met1 carries the post-translational modification N-acetylmethionine. The tract at residues 1-63 (MLGSSVKSVQ…GGSGSMAKAS (63 aa)) is disordered. 2 positions are modified to phosphoserine: Ser93 and Ser145. Disordered regions lie at residues 115 to 230 (SDDM…EERA) and 280 to 339 (SSLR…VGGS). Thr162 is modified (phosphothreonine). 2 positions are modified to phosphoserine: Ser197 and Ser202. Positions 258–283 (ESQRKRTVQNVLDLRQNLEETMSSLR) form a coiled coil. The segment covering 280-291 (SSLRGSQVTHSS) has biased composition (polar residues). Ser299, Ser311, Ser315, Ser365, and Ser394 each carry phosphoserine. Positions 304–318 (PRSVSSLSNRSSPLS) are enriched in low complexity. Disordered stretches follow at residues 391-463 (GYMS…RTDS) and 477-783 (SESE…AELP). Low complexity-rich tracts occupy residues 414–428 (DESS…DASD) and 436–456 (NASS…RSST). Residues Ser455, Ser477, Ser479, and Ser493 each carry the phosphoserine modification. Residues 479 to 489 (SEEKTPKKLEY) show a composition bias toward basic and acidic residues. Over residues 506–522 (ERPESCDDASKGGELKK) the composition is skewed to basic and acidic residues. Residue Ser531 is modified to Phosphoserine. Phosphothreonine is present on Thr537. Ser544 bears the Phosphoserine mark. Residue Thr547 is modified to Phosphothreonine. Residues 558-569 (GKPEGKATDKGK) are compositionally biased toward basic and acidic residues. Thr575 carries the post-translational modification Phosphothreonine. The segment covering 584–594 (AGRDRLSDAKK) has biased composition (basic and acidic residues). 2 stretches are compositionally biased toward polar residues: residues 618–638 (GTAT…QKSS) and 648–658 (RKTSLDVSNSV). Ser651 is modified (phosphoserine). The residue at position 690 (Arg690) is an Omega-N-methylarginine. Composition is skewed to polar residues over residues 696–712 (VSSS…QGGL) and 726–735 (GRSTPAPVNQ). Positions 733–758 (VNQTDREKEKAKAKAVALDSDNISLK) form a coiled coil. A phosphoserine mark is found at Ser752, Ser756, Ser762, Ser799, and Ser810. Positions 753 to 772 (DNISLKSIGSPESTPKNQAS) are enriched in polar residues. Disordered stretches follow at residues 800 to 840 (LANL…PLPS) and 893 to 982 (MSLP…SPPA). 2 stretches are compositionally biased toward low complexity: residues 807-818 (NSNSLDLPSSSD) and 893-902 (MSLPSAFPSS). Ser998 carries the phosphoserine modification. Thr1004 carries the phosphothreonine modification. Positions 1070 to 1161 (SSAEERMQSE…SEAQAVIQGA (92 aa)) form a coiled coil. Thr1168 bears the Phosphothreonine mark. Disordered stretches follow at residues 1172–1202 (LRIK…KDAD), 1242–1306 (ATPD…KEVS), 1359–1381 (VAPG…LSSP), and 1808–1841 (KLYH…SLDS). Ser1179 carries the phosphoserine modification. A compositionally biased stretch (low complexity) spans 1179 to 1198 (SSDSISSLNSITSHSSIGSS). The span at 1244–1259 (PDSSAPSSPKLQHGST) shows a compositional bias: polar residues. Residues 1260 to 1281 (ETASPSIKSSTSSSVGTEVTET) show a composition bias toward low complexity. Phosphoserine is present on Ser1263. The stretch at 1301–1360 (EKKEVSELRSELWEKEMKLTDIRLEALNSAHQLDQLRETMHNMQLEVDLLKAENDRLKVA) forms a coiled coil. Residues 1365–1381 (SGCTPGQVPGSSALSSP) are compositionally biased toward polar residues. Position 1380 is a phosphoserine (Ser1380).

It belongs to the Nav/unc-53 family. In terms of assembly, interacts with tubulin. In terms of tissue distribution, expressed in heart and brain. Present in brain (at protein level). In adult brain, found almost exclusively in areas of secondary neurogenesis from the hippocampus and the subventricular zone.

The protein resides in the cytoplasm. It is found in the cytoskeleton. Functionally, may be involved in neuronal migration. The protein is Neuron navigator 1 (Nav1) of Mus musculus (Mouse).